The sequence spans 439 residues: Trigger factor (439 aa).

One can recognise a PPIase FKBP-type domain in the interval 163–248 (GDRVTIDYRG…LNKLEAPKLP (86 aa)).

The protein belongs to the FKBP-type PPIase family. Tig subfamily.

The protein resides in the cytoplasm. The catalysed reaction is [protein]-peptidylproline (omega=180) = [protein]-peptidylproline (omega=0). In terms of biological role, involved in protein export. Acts as a chaperone by maintaining the newly synthesized protein in an open conformation. Functions as a peptidyl-prolyl cis-trans isomerase. This chain is Trigger factor, found in Nitrosomonas europaea (strain ATCC 19718 / CIP 103999 / KCTC 2705 / NBRC 14298).